A 560-amino-acid polypeptide reads, in one-letter code: MAASAFLLIASFLLVLMALAKPLGSLLARLINGEALPGVGGVERALWAVLGIRQEEMDWKRYLLAILLFNTLGLVLLFAILMCQGVLPLNPQNLPGLSWHLALNTAVSFVANTNWQSYAGESTVSYFSQMAGLAVQNFLSAATGIAVAFALIRAFARQSATTLGNAWQDLTRVTLWVLMPISLIIALFFIQQGAIQNFSAYQPFTTLEGARQMLPMGPVASQEAIKMLGTNGGGFFNANSSHPFENPTALTNVVQMLAIFLIPAALCFAFGDAVGDARQGRAILWTMTVIFVVCVALVMWAETTGNPHFLTLGADSAANMEGKESRFGILASSLFAVVTTAASCGAVNAMHDTFTALGGMIPMWLMQIGEVVFGGVGSGLYGMLLFVLLGVFIAGLMIGRTPEYLGKKIDVREMKMTALAILVTPALVLLGTALAMMTDAGRAGMFNPGIHGFSEVLYAVSSAANNNGSAFGGLSANTPFWNLLLAFCMWFGRFLVIIPVMAIAGSLAAKKAQPASPGTLPTHGALFIGLLTGTVLLVGALTFIPALALGPVAEHLSLVK.

The next 12 helical transmembrane spans lie at 6 to 26 (FLLIASFLLVLMALAKPLGSL), 63 to 83 (LLAILLFNTLGLVLLFAILMC), 132 to 152 (GLAVQNFLSAATGIAVAFALI), 175 to 195 (LWVLMPISLIIALFFIQQGAI), 250 to 270 (LTNVVQMLAIFLIPAALCFAF), 282 to 302 (AILWTMTVIFVVCVALVMWAE), 327 to 347 (FGILASSLFAVVTTAASCGAV), 356 to 376 (ALGGMIPMWLMQIGEVVFGGV), 379 to 399 (GLYGMLLFVLLGVFIAGLMIG), 416 to 436 (MTALAILVTPALVLLGTALAM), 483 to 503 (LLLAFCMWFGRFLVIIPVMAI), and 524 to 544 (GALFIGLLTGTVLLVGALTFI).

This sequence belongs to the KdpA family. As to quaternary structure, the system is composed of three essential subunits: KdpA, KdpB and KdpC.

The protein localises to the cell inner membrane. Part of the high-affinity ATP-driven potassium transport (or Kdp) system, which catalyzes the hydrolysis of ATP coupled with the electrogenic transport of potassium into the cytoplasm. This subunit binds the periplasmic potassium ions and delivers the ions to the membrane domain of KdpB through an intramembrane tunnel. This Cronobacter sakazakii (strain ATCC BAA-894) (Enterobacter sakazakii) protein is Potassium-transporting ATPase potassium-binding subunit.